Here is a 485-residue protein sequence, read N- to C-terminus: Glutamyl-tRNA(Gln) amidotransferase subunit A (485 aa).

Active-site charge relay system residues include Lys79 and Ser154. The active-site Acyl-ester intermediate is Ser178.

This sequence belongs to the amidase family. GatA subfamily. As to quaternary structure, heterotrimer of A, B and C subunits.

It carries out the reaction L-glutamyl-tRNA(Gln) + L-glutamine + ATP + H2O = L-glutaminyl-tRNA(Gln) + L-glutamate + ADP + phosphate + H(+). Its function is as follows. Allows the formation of correctly charged Gln-tRNA(Gln) through the transamidation of misacylated Glu-tRNA(Gln) in organisms which lack glutaminyl-tRNA synthetase. The reaction takes place in the presence of glutamine and ATP through an activated gamma-phospho-Glu-tRNA(Gln). This chain is Glutamyl-tRNA(Gln) amidotransferase subunit A, found in Staphylococcus aureus (strain USA300 / TCH1516).